We begin with the raw amino-acid sequence, 332 residues long: RNA polymerase principal sigma factor HrdD (332 aa).

The segment at 1–25 is disordered; that stretch reads MATRAVARRQSATGETADSASSVRA. Residues 10 to 22 show a composition bias toward polar residues; the sequence is QSATGETADSASS. The short motif at 124-137 is the Polymerase core binding element; it reads DLIQEGNAGLVRAV. A DNA-binding region (H-T-H motif) is located at residues 294-313; that stretch reads LTEVGKEHGLTRERIRQIEK.

The protein belongs to the sigma-70 factor family.

Sigma factors are initiation factors that promote the attachment of RNA polymerase to specific initiation sites and are then released. In Streptomyces viridifaciens, this protein is RNA polymerase principal sigma factor HrdD (hrdD).